We begin with the raw amino-acid sequence, 102 residues long: uncharacterized protein (102 aa).

Transmembrane regions (helical) follow at residues 1–21 (MVPL…LRPV), 42–62 (SIID…LILV), and 68–88 (SIHA…FSIV).

It is found in the membrane. This is an uncharacterized protein from Saccharomyces cerevisiae (strain ATCC 204508 / S288c) (Baker's yeast).